Here is a 274-residue protein sequence, read N- to C-terminus: Tryptophan synthase alpha chain (274 aa).

Catalysis depends on proton acceptor residues Glu49 and Asp60.

Belongs to the TrpA family. Tetramer of two alpha and two beta chains.

The enzyme catalyses (1S,2R)-1-C-(indol-3-yl)glycerol 3-phosphate + L-serine = D-glyceraldehyde 3-phosphate + L-tryptophan + H2O. Its pathway is amino-acid biosynthesis; L-tryptophan biosynthesis; L-tryptophan from chorismate: step 5/5. Its function is as follows. The alpha subunit is responsible for the aldol cleavage of indoleglycerol phosphate to indole and glyceraldehyde 3-phosphate. The protein is Tryptophan synthase alpha chain of Alkalilimnicola ehrlichii (strain ATCC BAA-1101 / DSM 17681 / MLHE-1).